Reading from the N-terminus, the 1057-residue chain is MSSQQFPRLGTPSPGLSQPPSQIASSGSAGLINQVATVNDEAGRDADVGTREHVGPSSSLPPREEKQEPVVVRPYPQVQMLPAHHAVASATPVAVTAPPAHLTPAVPLSFSEGLMKPPPKPTMPSRPIAPAPPSTMSLPPKVPGQVTVTMESSIPQASAIPVATISGQQGHPSNLHHIMTTNVQMSIIRSNAPGPPLHIGASHLPRGAAAAAVMSSSKVTTVLRPTSQLPNAATAQPAVQHLIHQPIQSRPPVTTSSTIPPAVVATVSATRAQSPVITTTAAHAADSTLSRPTLSIQHPPSAAISIQRPAQSRDVTTRITLPSHPALGTPKQQLHTMAQKTIFSTGTPVAAATVAPILATNTLPSTTTAGSVSHTQAPTSTIVTMTMPSHSSHATAVTTSNIPVAKVVPQQITHTSPRIQPDYPPERSSLIPISGHRASPNPVAMETRNDNRPSVPVQFQYFLPTYPPSAYPLAAHTYTPITSSVSTIRQYPVSAQAPNSTITAQTGVGVASTVHLNPMQLMTVDASHARHIQGIQPAPISTQGIQPAPIGTSGIQPAPIGTPGIHSAAPINTQGLQPAAMANQQPQPEGKTSAVVLADGATIVANPISNPFSAAPAATTVVQTHSQSASTNTPAQGSSPRPSILRKKPATDGMAVRKTLLPPQPPDVATPRVESSMRSASGSPRPAGAKPKSEVHVSIATPVTVSLETISNQNAEQPTVAVPPTAQQPPPTIPSMIAAASPPSQPAIALSTIPGAVPVTPPITTIAATPTLSAPVGGTPSTVLGPPVPEIKVKEEAEPVDITRPVSTVPPLATNTVSPSLALLASNLSMPPSDLPPGASPRKKPRKQQHVISTEEGDMMETNSTDDEKSAAKSLLVKAEKRKSPPKEYIDEEGVRYVPVRPRPPITLLRHYRNPWKAAYHHFQRYSDVRVKEEKKAMLQEIANQKGVSCRAQGWKVHLCAAQLLQLTNLEHDVYERLTNLQEGIIPKKKAATDDDLHRINELIQGNMQRCKLVMDQISEARDSMLKVLDHKDRVLKLLNKNGTVKKVSKLKRKEKV.

Positions 1 to 69 (MSSQQFPRLG…LPPREEKQEP (69 aa)) are disordered. Positions 14-28 (PGLSQPPSQIASSGS) are enriched in polar residues. A compositionally biased stretch (basic and acidic residues) spans 41-54 (EAGRDADVGTREHV). Arg-206 carries the omega-N-methylarginine modification. At Thr-329 the chain carries Phosphothreonine. Ser-416 and Ser-439 each carry phosphoserine. 2 disordered regions span residues 619–695 (TTVV…KSEV) and 718–740 (PTVA…IAAA). The span at 620–641 (TVVQTHSQSASTNTPAQGSSPR) shows a compositional bias: polar residues. A Glycyl lysine isopeptide (Lys-Gly) (interchain with G-Cter in SUMO2) cross-link involves residue Lys-794. Residues 827–873 (NLSMPPSDLPPGASPRKKPRKQQHVISTEEGDMMETNSTDDEKSAAK) are disordered. Positions 845–1057 (PRKQQHVIST…VSKLKRKEKV (213 aa)) are interactions with SIN3A and HDAC1. The residue at position 864 (Ser-864) is a Phosphoserine. A Phosphothreonine modification is found at Thr-865. Glycyl lysine isopeptide (Lys-Gly) (interchain with G-Cter in SUMO2) cross-links involve residues Lys-873 and Lys-878. Position 884 is a phosphoserine (Ser-884).

The protein belongs to the SAP130 family. As to quaternary structure, component of a mSin3A corepressor complex that contains SIN3A, SAP130, SUDS3/SAP45, ARID4B/SAP180, HDAC1 and HDAC2. Interacts (released by dead or dying cells) with CLEC4E. Post-translationally, acetylated. In terms of processing, sumoylated with SUMO1.

It is found in the nucleus. Acts as a transcriptional repressor. May function in the assembly and/or enzymatic activity of the mSin3A corepressor complex or in mediating interactions between the complex and other regulatory complexes. In Mus musculus (Mouse), this protein is Histone deacetylase complex subunit SAP130 (Sap130).